A 156-amino-acid chain; its full sequence is Small ribosomal subunit protein uS7 (156 aa).

It belongs to the universal ribosomal protein uS7 family. As to quaternary structure, part of the 30S ribosomal subunit. Contacts proteins S9 and S11.

In terms of biological role, one of the primary rRNA binding proteins, it binds directly to 16S rRNA where it nucleates assembly of the head domain of the 30S subunit. Is located at the subunit interface close to the decoding center, probably blocks exit of the E-site tRNA. The protein is Small ribosomal subunit protein uS7 of Mycobacterium leprae (strain TN).